A 508-amino-acid chain; its full sequence is Protein adenylyltransferase fic-1 (508 aa).

Residues 44 to 64 form a helical membrane-spanning segment; it reads TVIIISVLVSLICQHFVPYAV. TPR repeat units follow at residues 147 to 180 and 181 to 214; these read AILA…APTN and PQIL…DPGN. Positions 270 to 275 match the Inhibitory (S/T)XXXE(G/N) motif motif; sequence TVAIEG. E274 lines the ATP pocket. The region spanning 326 to 461 is the Fido domain; that stretch reads ISIDDILEMH…LRPFVRYVAK (136 aa). An O-AMP-threonine; by autocatalysis modification is found at T352. 357 to 360 provides a ligand contact to ATP; the sequence is VGRF. H404 is a catalytic residue. ATP-binding positions include 408 to 415, 440 to 441, and N448; these read DGNGRTAR and YY. At T476 the chain carries O-AMP-threonine; by autocatalysis. The disordered stretch occupies residues 482 to 508; sequence LNSGDSKLTPEESEVSEKIEAECRAGN. Basic and acidic residues predominate over residues 496 to 508; sequence VSEKIEAECRAGN.

It belongs to the fic family. In terms of assembly, forms homodimers; homodimerization might be required for adenylyltransferase activity. As to expression, ubiquitously expressed, with high expression in the germline.

The protein resides in the endoplasmic reticulum membrane. It localises to the nucleus membrane. It carries out the reaction L-tyrosyl-[protein] + ATP = O-(5'-adenylyl)-L-tyrosyl-[protein] + diphosphate. It catalyses the reaction L-threonyl-[protein] + ATP = 3-O-(5'-adenylyl)-L-threonyl-[protein] + diphosphate. The catalysed reaction is 3-O-(5'-adenylyl)-L-threonyl-[protein] + H2O = L-threonyl-[protein] + AMP + H(+). Its activity is regulated as follows. The side chain of Glu-274 determines which of the two opposing activities (AMPylase or de-AMPylase) will take place. In response to endoplasmic reticulum stress, mediates de-AMPylase activity. Adenylyltransferase activity is inhibited by the inhibitory helix present at the N-terminus: Glu-274 binds ATP and competes with ATP-binding at Arg-415, thereby preventing adenylyltransferase activity. In unstressed cells, disengagement of Glu-274 promotes adenylyltransferase activity. Activation dissociates ATP-binding from Glu-274, allowing ordered binding of the entire ATP moiety with the alpha-phosphate in an orientation that is productive for accepting an incoming target hydroxyl side chain. In terms of biological role, protein that can both mediate the addition of adenosine 5'-monophosphate (AMP) to specific residues of target proteins (AMPylation), and the removal of the same modification from target proteins (de-AMPylation), depending on the context. The side chain of Glu-274 determines which of the two opposing activities (AMPylase or de-AMPylase) will take place. Adenylyltransferase that mediates the addition of adenosine 5'-monophosphate (AMP) to specific residues of target proteins. In vivo target proteins include the heat-shock 70 family proteins hsp-1 and hsp-3 and the translation elongation factors eef-1A, eef-1G and eef-2. Can AMPylate core histone H3 in vitro. Can also act as a phosphodiesterase by mediating removal of ATP (de-AMPylation) from target proteins. Decreases susceptibility to P.aeruginosa-mediated killing and might therefore play a role in the innate immune response. In Caenorhabditis elegans, this protein is Protein adenylyltransferase fic-1.